Here is a 373-residue protein sequence, read N- to C-terminus: Meiosis-specific kinetochore protein (373 aa).

Disordered stretches follow at residues 1–91 (MWPL…QDEK) and 250–276 (STPE…LTST). Residues 77–91 (SLQENRSSEDTQDEK) are compositionally biased toward basic and acidic residues. Positions 275 to 277 (STP) match the POLO box domain (PBD)-binding motif. Positions 332-335 (EICC) are required for localization to kinetochores.

As to quaternary structure, interacts with CENPC. Interacts with PLK1; required for recruitment of PLK1 at kinetochores.

The protein resides in the chromosome. Its subcellular location is the centromere. It localises to the kinetochore. In terms of biological role, key regulator of kinetochore function during meiosis I: required both for mono-orientation of kinetochores on sister chromosomes and protection of centromeric cohesin from separase-mediated cleavage. Acts by facilitating kinetochore mono-orientation during meiosis I, when kinetochores on sister chromosomes face the same direction and are thus captured and pulled by spindle fibers from the same pole. Also required to prevent cleavage of cohesin at centromeres during meiosis I, possibly by acting as a regulator of the shugoshin-dependent protection pathway. Acts in collaboration with PLK1: required for PLK1 enrichment to kinetochores. Not required during meiosis II or mitosis. The protein is Meiosis-specific kinetochore protein of Homo sapiens (Human).